A 608-amino-acid chain; its full sequence is Kelch-like protein 10 (608 aa).

The region spanning 39–106 is the BTB domain; sequence CDVVIKVNGF…AYTRTVPITP (68 aa). Kelch repeat units lie at residues 292 to 339, 340 to 386, 388 to 433, 434 to 480, 481 to 527, and 529 to 574; these read ILFA…YLKG, YVYI…VLGN, IYAM…TLYG, KVYI…AYGE, HVYA…VVDD, and LFVV…VVPG. S501 bears the Phosphoserine mark.

In terms of assembly, self-associates. Interacts with CUL3; indicative for the participation in an E3 ubiquitin ligase complex.

The protein localises to the cytoplasm. Its pathway is protein modification; protein ubiquitination. Its function is as follows. May be a substrate-specific adapter of a CUL3-based E3 ubiquitin-protein ligase complex which mediates the ubiquitination and subsequent proteasomal degradation of target proteins during spermatogenesis. In Homo sapiens (Human), this protein is Kelch-like protein 10 (KLHL10).